The following is a 407-amino-acid chain: MTTFSEKEKIQLLADIVELQTENNNEIDVCNYLKDLFDKYDIKSEILKVNEHRANIVAEIGNGSPILALSGHMDVVDAGNQDNWTYPPFQLTEKAGKLYGRGTTDMKGGLMALVITLIELKEQNQLPQGTIRLLATAGEEKEQEGAKLLADKGYLDDVDGLIIAEPTGSGIYYAHKGSMSCKVTATGKAVHSSVPFIGDNAIDTLLEFYNQFKEKYSELKKHDTKHELDVAPMFKSLIGKEISEEDANYASGLTAVCSIINGGKQFNSVPDEASLEFNVRPVPEYDNDFIESFFQNIINDVDSNKLSLDIPSNHRPVTSDKNSKLITTIKDVASSYVEQDEIFVSALVGATDASSFLGDNKDNVDLAIFGPGNPLMAHQIDEYIEKDMYLKYIDIFKEASIQYLKEK.

H72 provides a ligand contact to Zn(2+). Residue D74 is part of the active site. A Zn(2+)-binding site is contributed by D105. E139 acts as the Proton acceptor in catalysis. Zn(2+)-binding residues include E140, E165, and H378.

This sequence belongs to the peptidase M20A family. Requires Zn(2+) as cofactor. The cofactor is Co(2+).

The enzyme catalyses N-succinyl-(2S,6S)-2,6-diaminopimelate + H2O = (2S,6S)-2,6-diaminopimelate + succinate. It functions in the pathway amino-acid biosynthesis; L-lysine biosynthesis via DAP pathway; LL-2,6-diaminopimelate from (S)-tetrahydrodipicolinate (succinylase route): step 3/3. The protein is Probable succinyl-diaminopimelate desuccinylase (dapE) of Staphylococcus aureus (strain N315).